The primary structure comprises 88 residues: U18-hexatoxin-Hi1a (88 aa).

The N-terminal stretch at 1–17 (MRIYSLLILSFLLLASA) is a signal peptide. Positions 18 to 47 (VLINSAEMPRSEKSLLYSIMQGREDSEEGR) are excised as a propeptide. Disulfide bonds link C48-C63, C55-C69, C62-C81, and C71-C79.

Belongs to the neurotoxin 07 (Beta/delta-agtx) family. 02 (aga-3) subfamily. As to expression, expressed by the venom gland.

It localises to the secreted. Weak insecticidal toxin with probable ion channel impairing activity. In vivo, induces paralysis when injected into sheep blowflies (L.cuprina). Shows weak toxicity, since it is only toxic at high doses, and flies recover within 24 hours. The sequence is that of U18-hexatoxin-Hi1a from Hadronyche infensa (Fraser island funnel-web spider).